The primary structure comprises 132 residues: Small ribosomal subunit protein uS8 (132 aa).

It belongs to the universal ribosomal protein uS8 family. Part of the 30S ribosomal subunit. Contacts proteins S5 and S12.

Its function is as follows. One of the primary rRNA binding proteins, it binds directly to 16S rRNA central domain where it helps coordinate assembly of the platform of the 30S subunit. This chain is Small ribosomal subunit protein uS8, found in Borrelia duttonii (strain Ly).